The sequence spans 149 residues: Calmodulin (149 aa).

An N-acetylalanine modification is found at A2. 4 consecutive EF-hand domains span residues 8–43 (EQIAEFKEAFSLFDKDGDGTITTKELGTVMRSLGQN), 44–79 (PTEAELQDMINEVDTDGNGTIDFPEFLTMMARKMKE), 81–116 (DSEEEIREAFRVFDKDGNGFISAAELRHVMTNLGEK), and 117–149 (LTDEEVDEMIREADTDGDGQVNYEEFVGMMTSK). Residues D21, D23, D25, T27, E32, D57, D59, N61, T63, E68, D94, D96, N98, and E105 each coordinate Ca(2+). The residue at position 116 (K116) is an N6,N6,N6-trimethyllysine. Ca(2+) is bound by residues D130, D132, D134, Q136, and E141.

It belongs to the calmodulin family.

Its function is as follows. Calmodulin mediates the control of a large number of enzymes, ion channels and other proteins by Ca(2+). Among the enzymes to be stimulated by the calmodulin-Ca(2+) complex are a number of protein kinases and phosphatases. In Suberites domuncula (Sponge), this protein is Calmodulin.